Reading from the N-terminus, the 284-residue chain is Ubiquinone biosynthesis protein COQ4, mitochondrial (284 aa).

4 residues coordinate Zn(2+): H165, D166, H169, and E181.

Belongs to the COQ4 family. In terms of assembly, component of a multi-subunit COQ enzyme complex, composed of at least COQ3, COQ4, COQ5, COQ6, COQ7 and COQ9. It depends on Zn(2+) as a cofactor.

The protein resides in the mitochondrion inner membrane. It carries out the reaction a 4-hydroxy-3-methoxy-5-(all-trans-polyprenyl)benzoate + H(+) = a 2-methoxy-6-(all-trans-polyprenyl)phenol + CO2. It functions in the pathway cofactor biosynthesis; ubiquinone biosynthesis. Lyase that catalyzes the C1-decarboxylation of 4-hydroxy-3-methoxy-5-(all-trans-polyprenyl)benzoic acid into 2-methoxy-6-(all-trans-polyprenyl)phenol during ubiquinone biosynthesis. This is Ubiquinone biosynthesis protein COQ4, mitochondrial from Ajellomyces dermatitidis (strain ER-3 / ATCC MYA-2586) (Blastomyces dermatitidis).